Reading from the N-terminus, the 277-residue chain is Caspase-3 (277 aa).

The residue at position 1 (M1) is an N-acetylmethionine. 2 propeptides span residues 1–9 (MENTENSVD) and 10–28 (AKSFKNAETKILHGSKSMD). An N6-acetyllysine modification is found at K11. S26 bears the Phosphoserine mark. Catalysis depends on residues H121 and C163. Residue C163 is modified to S-nitrosocysteine; in inhibited form.

The protein belongs to the peptidase C14A family. Heterotetramer that consists of two anti-parallel arranged heterodimers, each one formed by a 17 kDa (p17) and a 12 kDa (p12) subunit. Interacts with BIRC6/bruce. Cleavage by granzyme B, caspase-6, caspase-8 and caspase-10 generates the two active subunits. Additional processing of the propeptides is likely due to the autocatalytic activity of the activated protease. Active heterodimers between the small subunit of caspase-7 protease and the large subunit of caspase-3 also occur and vice versa. Post-translationally, S-nitrosylated on its catalytic site cysteine in unstimulated cell lines and denitrosylated upon activation of the Fas apoptotic pathway, associated with an increase in intracellular caspase activity. Fas therefore activates caspase-3 not only by inducing the cleavage of the caspase zymogen to its active subunits, but also by stimulating the denitrosylation of its active site thiol. In terms of processing, ubiquitinated by BIRC6; this activity is inhibited by DIABLO/SMAC.

It localises to the cytoplasm. It carries out the reaction Strict requirement for an Asp residue at positions P1 and P4. It has a preferred cleavage sequence of Asp-Xaa-Xaa-Asp-|- with a hydrophobic amino-acid residue at P2 and a hydrophilic amino-acid residue at P3, although Val or Ala are also accepted at this position.. With respect to regulation, inhibited by BIRC6; following inhibition of BIRC6-caspase binding by DIABLO/SMAC, BIRC6 is subjected to caspase cleavage, leading to an increase in active caspases. Its function is as follows. Involved in the activation cascade of caspases responsible for apoptosis execution. At the onset of apoptosis, it proteolytically cleaves poly(ADP-ribose) polymerase PARP1 at a '216-Asp-|-Gly-217' bond. Cleaves and activates sterol regulatory element binding proteins (SREBPs) between the basic helix-loop-helix leucine zipper domain and the membrane attachment domain. Cleaves and activates caspase-6, -7 and -9 (CASP6, CASP7 and CASP9, respectively). Cleaves and inactivates interleukin-18 (IL18). Triggers cell adhesion in sympathetic neurons through RET cleavage. Cleaves IL-1 beta between an Asp and an Ala, releasing the mature cytokine which is involved in a variety of inflammatory processes. Cleaves and inhibits serine/threonine-protein kinase AKT1 in response to oxidative stress. Acts as an inhibitor of type I interferon production during virus-induced apoptosis by mediating cleavage of antiviral proteins CGAS, IRF3 and MAVS, thereby preventing cytokine overproduction. Also involved in pyroptosis by mediating cleavage and activation of gasdermin-E (GSDME). Cleaves XRCC4 and phospholipid scramblase proteins XKR4, XKR8 and XKR9, leading to promote phosphatidylserine exposure on apoptotic cell surface. Cleaves BIRC6 following inhibition of BIRC6-caspase binding by DIABLO/SMAC. In Canis lupus familiaris (Dog), this protein is Caspase-3 (CASP3).